Consider the following 1378-residue polypeptide: DNA-directed RNA polymerase subunit beta' (1378 aa).

Zn(2+) is bound by residues Cys-69, Cys-71, Cys-84, and Cys-87. Mg(2+) contacts are provided by Asp-460, Asp-462, and Asp-464. 4 residues coordinate Zn(2+): Cys-808, Cys-882, Cys-889, and Cys-892.

This sequence belongs to the RNA polymerase beta' chain family. As to quaternary structure, the RNAP catalytic core consists of 2 alpha, 1 beta, 1 beta' and 1 omega subunit. When a sigma factor is associated with the core the holoenzyme is formed, which can initiate transcription. Requires Mg(2+) as cofactor. Zn(2+) is required as a cofactor.

It carries out the reaction RNA(n) + a ribonucleoside 5'-triphosphate = RNA(n+1) + diphosphate. Its function is as follows. DNA-dependent RNA polymerase catalyzes the transcription of DNA into RNA using the four ribonucleoside triphosphates as substrates. This is DNA-directed RNA polymerase subunit beta' from Rickettsia canadensis (strain McKiel).